Consider the following 462-residue polypeptide: ATP synthase subunit beta 2 (462 aa).

ATP is bound at residue 151–158; the sequence is GGAGVGKT.

The protein belongs to the ATPase alpha/beta chains family. In terms of assembly, F-type ATPases have 2 components, CF(1) - the catalytic core - and CF(0) - the membrane proton channel. CF(1) has five subunits: alpha(3), beta(3), gamma(1), delta(1), epsilon(1). CF(0) has three main subunits: a(1), b(2) and c(9-12). The alpha and beta chains form an alternating ring which encloses part of the gamma chain. CF(1) is attached to CF(0) by a central stalk formed by the gamma and epsilon chains, while a peripheral stalk is formed by the delta and b chains.

It localises to the cell inner membrane. It carries out the reaction ATP + H2O + 4 H(+)(in) = ADP + phosphate + 5 H(+)(out). Functionally, produces ATP from ADP in the presence of a proton gradient across the membrane. The catalytic sites are hosted primarily by the beta subunits. The polypeptide is ATP synthase subunit beta 2 (Chlorobaculum tepidum (strain ATCC 49652 / DSM 12025 / NBRC 103806 / TLS) (Chlorobium tepidum)).